Here is a 716-residue protein sequence, read N- to C-terminus: Leucine-rich repeat neuronal protein 1 (716 aa).

The signal sequence occupies residues Met1 to Ser25. In terms of domain architecture, LRRNT spans Ser26 to Ser72. The Extracellular portion of the chain corresponds to Ser26 to Ala631. N-linked (GlcNAc...) asparagine glycosylation is present at Asn69. 9 LRR repeats span residues Asp73–Phe95, Asn96–Asn117, Gln120–Asp141, Asn144–Gly165, Asn168–Ser189, Asn192–Pro213, Asn216–Gly237, Ser240–Lys261, and Asn264–Asn285. Asn96, Asn106, and Asn117 each carry an N-linked (GlcNAc...) asparagine glycan. The LRRCT domain occupies Asn371–Pro424. Asn385 carries an N-linked (GlcNAc...) asparagine glycan. The Ig-like C2-type domain occupies Pro424–Lys515. Cys447 and Cys499 form a disulfide bridge. N-linked (GlcNAc...) asparagine glycans are attached at residues Asn517, Asn582, and Asn611. Positions Gln525–Ala617 constitute a Fibronectin type-III domain. The helical transmembrane segment at Leu632–Ile652 threads the bilayer. Topologically, residues Ala653–Trp716 are cytoplasmic. Residues Asp691–Ala700 are compositionally biased toward basic and acidic residues. Residues Asp691 to Trp716 form a disordered region. Positions Thr702–Trp716 are enriched in polar residues.

The protein localises to the membrane. In Bos taurus (Bovine), this protein is Leucine-rich repeat neuronal protein 1 (LRRN1).